A 576-amino-acid polypeptide reads, in one-letter code: Arginine--tRNA ligase (576 aa).

A 'HIGH' region motif is present at residues 126 to 136 (ANPTGPMHIGH).

This sequence belongs to the class-I aminoacyl-tRNA synthetase family. Monomer.

The protein resides in the cytoplasm. It catalyses the reaction tRNA(Arg) + L-arginine + ATP = L-arginyl-tRNA(Arg) + AMP + diphosphate. This Rickettsia felis (strain ATCC VR-1525 / URRWXCal2) (Rickettsia azadi) protein is Arginine--tRNA ligase.